We begin with the raw amino-acid sequence, 156 residues long: Probable cyclic pyranopterin monophosphate synthase (156 aa).

Residue 109–110 (MD) participates in substrate binding. Aspartate 124 is a catalytic residue.

It belongs to the MoaC family. As to quaternary structure, homohexamer; trimer of dimers.

The enzyme catalyses (8S)-3',8-cyclo-7,8-dihydroguanosine 5'-triphosphate = cyclic pyranopterin phosphate + diphosphate. Its pathway is cofactor biosynthesis; molybdopterin biosynthesis. In terms of biological role, catalyzes the conversion of (8S)-3',8-cyclo-7,8-dihydroguanosine 5'-triphosphate to cyclic pyranopterin monophosphate (cPMP). The sequence is that of Probable cyclic pyranopterin monophosphate synthase from Methanopyrus kandleri (strain AV19 / DSM 6324 / JCM 9639 / NBRC 100938).